A 397-amino-acid polypeptide reads, in one-letter code: Elongation factor Tu (397 aa).

One can recognise a tr-type G domain in the interval 10–207 (KPHVNIGTIG…ACDSYIPEPE (198 aa)). The segment at 19–26 (GHIDHGKT) is G1. Position 19-26 (19-26 (GHIDHGKT)) interacts with GTP. A Mg(2+)-binding site is contributed by threonine 26. A G2 region spans residues 60–64 (GITIA). The segment at 81 to 84 (DCPG) is G3. GTP is bound by residues 81–85 (DCPGH) and 136–139 (NKCD). The tract at residues 136–139 (NKCD) is G4. The interval 174–176 (SAL) is G5.

It belongs to the TRAFAC class translation factor GTPase superfamily. Classic translation factor GTPase family. EF-Tu/EF-1A subfamily. As to quaternary structure, monomer.

Its subcellular location is the cytoplasm. It carries out the reaction GTP + H2O = GDP + phosphate + H(+). Its function is as follows. GTP hydrolase that promotes the GTP-dependent binding of aminoacyl-tRNA to the A-site of ribosomes during protein biosynthesis. This Oleidesulfovibrio alaskensis (strain ATCC BAA-1058 / DSM 17464 / G20) (Desulfovibrio alaskensis) protein is Elongation factor Tu.